The sequence spans 130 residues: Large ribosomal subunit protein eL32 (130 aa).

Belongs to the eukaryotic ribosomal protein eL32 family.

This Pyrococcus abyssi (strain GE5 / Orsay) protein is Large ribosomal subunit protein eL32 (rpl32e).